A 332-amino-acid chain; its full sequence is Adenosine deaminase (332 aa).

Positions 12 and 14 each coordinate Zn(2+). Positions 14, 16, and 170 each coordinate substrate. H197 serves as a coordination point for Zn(2+). Catalysis depends on E200, which acts as the Proton donor. Residue D278 coordinates Zn(2+). D279 serves as a coordination point for substrate.

This sequence belongs to the metallo-dependent hydrolases superfamily. Adenosine and AMP deaminases family. Adenosine deaminase subfamily. Requires Zn(2+) as cofactor.

The catalysed reaction is adenosine + H2O + H(+) = inosine + NH4(+). It carries out the reaction 2'-deoxyadenosine + H2O + H(+) = 2'-deoxyinosine + NH4(+). In terms of biological role, catalyzes the hydrolytic deamination of adenosine and 2-deoxyadenosine. This is Adenosine deaminase from Serratia proteamaculans (strain 568).